Here is a 345-residue protein sequence, read N- to C-terminus: Uroporphyrinogen decarboxylase (345 aa).

Substrate-binding positions include 27-31, Phe46, Asp76, Tyr152, Ser207, and His321; that span reads RQAGR.

It belongs to the uroporphyrinogen decarboxylase family. In terms of assembly, homodimer.

The protein resides in the cytoplasm. It carries out the reaction uroporphyrinogen III + 4 H(+) = coproporphyrinogen III + 4 CO2. Its pathway is porphyrin-containing compound metabolism; protoporphyrin-IX biosynthesis; coproporphyrinogen-III from 5-aminolevulinate: step 4/4. Functionally, catalyzes the decarboxylation of four acetate groups of uroporphyrinogen-III to yield coproporphyrinogen-III. The protein is Uroporphyrinogen decarboxylase of Staphylococcus aureus (strain bovine RF122 / ET3-1).